Here is a 526-residue protein sequence, read N- to C-terminus: Putative ankyrin repeat protein R840 (526 aa).

ANK repeat units lie at residues 78–107 (TLNECLFISCKRGRNDFVKYFVSKGANIRS), 108–137 (RDNFAIKLACEHGHIEVVKYLIDNGVDIRS), 139–167 (KNYAVRIACNNGHIDIVKLLISKGANIRD), 169–197 (DNCAIKWASENGHIEIVKILVSQGYDSTS), 198–227 (NFNEPVILAVKNGHLEVVKYLVSQSDRCRN), 229–255 (SAIISAAENGHIEIVKFLASRGSNIRI), 256–285 (DDDYTIRIASGNGHLEVVKFLVSKGCNIRS), 286–315 (EIDHAVQWASTNGHLEVVEYLVSQGADIKS), 317–345 (YDRSVRCASQNGHIEVVKYLVSQGANIRN), 346–375 (INDYAVRYASENGHIEVVEYLVSQGANIRV), 376–405 (DNDSPLLRACLKGHIKVVKFLVSSGADIRV), 406–435 (NNYQPLLIAAGNGHLEILKYLVSQGVNVSI), 437–467 (NVPLVGIACIDGYGYFEIVKYLVSIGADINL), 468–497 (ADDMAIRLASEYGHLDIVKYLVENGANVRA), and 499–526 (NDYAIKQAHRKGHQEVVNYLLSKGAILS).

The protein is Putative ankyrin repeat protein R840 of Acanthamoeba polyphaga (Amoeba).